Consider the following 100-residue polypeptide: Large ribosomal subunit protein mL53 (100 aa).

It belongs to the mitochondrion-specific ribosomal protein mL53 family. As to quaternary structure, component of the mitochondrial large ribosomal subunit (mt-LSU). Mature yeast 74S mitochondrial ribosomes consist of a small (37S) and a large (54S) subunit. The 37S small subunit contains a 15S ribosomal RNA (15S mt-rRNA) and at least 32 different proteins. The 54S large subunit contains a 21S rRNA (21S mt-rRNA) and at least 45 different proteins.

The protein resides in the mitochondrion. Functionally, component of the mitochondrial ribosome (mitoribosome), a dedicated translation machinery responsible for the synthesis of mitochondrial genome-encoded proteins, including at least some of the essential transmembrane subunits of the mitochondrial respiratory chain. The mitoribosomes are attached to the mitochondrial inner membrane and translation products are cotranslationally integrated into the membrane. The protein is Large ribosomal subunit protein mL53 (mrpl44) of Schizosaccharomyces pombe (strain 972 / ATCC 24843) (Fission yeast).